We begin with the raw amino-acid sequence, 591 residues long: Aspartate--tRNA ligase (591 aa).

An L-aspartate-binding site is contributed by E173. The aspartate stretch occupies residues 197 to 200 (QLFK). R219 serves as a coordination point for L-aspartate. ATP is bound by residues 219–221 (RDE) and Q228. Residue H448 coordinates L-aspartate. An ATP-binding site is contributed by E482. Residue R489 coordinates L-aspartate. Position 534 to 537 (534 to 537 (GLDR)) interacts with ATP.

It belongs to the class-II aminoacyl-tRNA synthetase family. Type 1 subfamily. As to quaternary structure, homodimer.

It is found in the cytoplasm. It catalyses the reaction tRNA(Asp) + L-aspartate + ATP = L-aspartyl-tRNA(Asp) + AMP + diphosphate. Its function is as follows. Catalyzes the attachment of L-aspartate to tRNA(Asp) in a two-step reaction: L-aspartate is first activated by ATP to form Asp-AMP and then transferred to the acceptor end of tRNA(Asp). This is Aspartate--tRNA ligase from Shewanella sp. (strain ANA-3).